The following is a 472-amino-acid chain: 4-O-methyl-glucuronoyl methylesterase 1 (472 aa).

Positions 1-20 are cleaved as a signal peptide; it reads MKSAAYLAALAAVLPAYVNA. The 36-residue stretch at 21–56 folds into the CBM1 domain; the sequence is QAQEWGQCGGIGWTGATTCVSGTVCTVLNPYYSQCL. A disordered region spans residues 62–97; it reads TAPPPPPPPPTSVSSSSSSSTSSAPPSGPSGTSPTC. Residues 63-72 are compositionally biased toward pro residues; that stretch reads APPPPPPPPT. Residues 73–96 are compositionally biased toward low complexity; it reads SVSSSSSSSTSSAPPSGPSGTSPT. Intrachain disulfides connect C97/C131, C283/C419, and C315/C391. The GXSYXG catalytic site motif motif lies at 282-287; the sequence is GCSRDG. Catalysis depends on S284, which acts as the Nucleophile. The substrate site is built by K288, Q330, E338, and W382. The active-site Proton donor/acceptor is H418. Residue N465 is glycosylated (N-linked (GlcNAc...) asparagine).

This sequence belongs to the carbohydrate esterase 15 (CE15) family.

Its subcellular location is the secreted. The catalysed reaction is a 4-O-methyl-alpha-D-glucuronosyl ester derivative + H2O = 4-O-methyl-alpha-D-glucuronate derivative + an alcohol + H(+). Its function is as follows. Glucuronoyl esterase which may play a significant role in biomass degradation, as it is considered to disconnect hemicellulose from lignin through the hydrolysis of the ester bond between 4-O-methyl-D-glucuronic acid residues of glucuronoxylans and aromatic alcohols of lignin. Can hydrolyze benzyl glucuronic acid (BnGlcA), allyl glucuronic acid (allylGlcA) and to a lower degree methyl glucuronic acid (MeGlcA) in vitro. In Phanerochaete chrysosporium (strain RP-78 / ATCC MYA-4764 / FGSC 9002) (White-rot fungus), this protein is 4-O-methyl-glucuronoyl methylesterase 1.